Reading from the N-terminus, the 24-residue chain is Antimicrobial peptide PGQ (24 aa).

Belongs to the gastrin/cholecystokinin family. Magainin subfamily. Is synthesized in the stomach and stored in a novel granular multinucleated cell in the gastric mucosa. It is stored as active, processed peptides in large granules within the granular gland secretions of the skin.

Its subcellular location is the secreted. Its function is as follows. Antimicrobial peptide. This is Antimicrobial peptide PGQ (pgq) from Xenopus laevis (African clawed frog).